We begin with the raw amino-acid sequence, 630 residues long: Glutathione hydrolase proenzyme 1 (630 aa).

Residues methionine 1–serine 49 are Cytoplasmic-facing. The helical; Signal-anchor for type II membrane protein transmembrane segment at isoleucine 50–leucine 70 threads the bilayer. Topologically, residues serine 71–tyrosine 630 are lumenal. The N-linked (GlcNAc...) asparagine glycan is linked to asparagine 156. Arginine 165 contributes to the L-glutamate binding site. Residues asparagine 180, asparagine 315, asparagine 397, and asparagine 417 are each glycosylated (N-linked (GlcNAc...) asparagine). Threonine 441 (nucleophile) is an active-site residue. Residues serine 459, asparagine 461, aspartate 483, serine 511–serine 512, and glycine 532–glycine 533 contribute to the L-glutamate site. N-linked (GlcNAc...) asparagine glycosylation is present at asparagine 612.

The protein belongs to the gamma-glutamyltransferase family. In terms of assembly, heterodimer composed of the light and heavy chains. The active site is located in the light chain. Post-translationally, cleaved by autocatalysis into a large and a small subunit.

It localises to the endoplasmic reticulum membrane. It carries out the reaction an N-terminal (5-L-glutamyl)-[peptide] + an alpha-amino acid = 5-L-glutamyl amino acid + an N-terminal L-alpha-aminoacyl-[peptide]. The catalysed reaction is glutathione + H2O = L-cysteinylglycine + L-glutamate. The enzyme catalyses an S-substituted glutathione + H2O = an S-substituted L-cysteinylglycine + L-glutamate. Its pathway is sulfur metabolism; glutathione metabolism. Functionally, catalyzes the transfer of the gamma-glutamyl moiety of glutathione (GSH) and other gamma-glutamyl compounds to amino acids and peptides. Major GSH-degrading enzyme, catalyzing the hydrolytic release of L-glutamate from GSH. This chain is Glutathione hydrolase proenzyme 1 (ggt1), found in Schizosaccharomyces pombe (strain 972 / ATCC 24843) (Fission yeast).